Reading from the N-terminus, the 342-residue chain is Anthranilate phosphoribosyltransferase (342 aa).

5-phospho-alpha-D-ribose 1-diphosphate is bound by residues glycine 83, 86 to 87 (GD), threonine 91, 93 to 96 (NVST), 111 to 119 (KHGNRSVSG), and serine 123. Residue glycine 83 coordinates anthranilate. Serine 95 contributes to the Mg(2+) binding site. Position 114 (asparagine 114) interacts with anthranilate. Residue arginine 169 coordinates anthranilate. The Mg(2+) site is built by aspartate 228 and glutamate 229.

This sequence belongs to the anthranilate phosphoribosyltransferase family. As to quaternary structure, homodimer. It depends on Mg(2+) as a cofactor.

It carries out the reaction N-(5-phospho-beta-D-ribosyl)anthranilate + diphosphate = 5-phospho-alpha-D-ribose 1-diphosphate + anthranilate. It functions in the pathway amino-acid biosynthesis; L-tryptophan biosynthesis; L-tryptophan from chorismate: step 2/5. Functionally, catalyzes the transfer of the phosphoribosyl group of 5-phosphorylribose-1-pyrophosphate (PRPP) to anthranilate to yield N-(5'-phosphoribosyl)-anthranilate (PRA). The protein is Anthranilate phosphoribosyltransferase of Halorhodospira halophila (strain DSM 244 / SL1) (Ectothiorhodospira halophila (strain DSM 244 / SL1)).